The sequence spans 147 residues: Cyanate hydratase (147 aa).

Active-site residues include arginine 88, glutamate 91, and serine 114.

The protein belongs to the cyanase family.

The enzyme catalyses cyanate + hydrogencarbonate + 3 H(+) = NH4(+) + 2 CO2. Its function is as follows. Catalyzes the reaction of cyanate with bicarbonate to produce ammonia and carbon dioxide. This Ralstonia pickettii (strain 12J) protein is Cyanate hydratase.